The chain runs to 104 residues: METIAFRMVLNPGQSEEYRRRHREIWPELVETLREAGIRDYWIFLDDATNHLFAVLKRERDHRMDQLVTDDVMRKWWGFMSDIMATGSDGAPAQKPLVPMFYLP.

Tyr-18 serves as a coordination point for substrate. His-22 acts as the Proton donor in catalysis. Substrate-binding positions include Tyr-41 and 76–77 (WW).

It belongs to the rhamnose mutarotase family. Homodimer.

It is found in the cytoplasm. The enzyme catalyses alpha-L-rhamnose = beta-L-rhamnose. It participates in carbohydrate metabolism; L-rhamnose metabolism. Involved in the anomeric conversion of L-rhamnose. This chain is L-rhamnose mutarotase, found in Burkholderia ambifaria (strain MC40-6).